Consider the following 118-residue polypeptide: Large ribosomal subunit protein bL20 (118 aa).

This sequence belongs to the bacterial ribosomal protein bL20 family.

Its function is as follows. Binds directly to 23S ribosomal RNA and is necessary for the in vitro assembly process of the 50S ribosomal subunit. It is not involved in the protein synthesizing functions of that subunit. This is Large ribosomal subunit protein bL20 from Sodalis glossinidius (strain morsitans).